The sequence spans 1014 residues: MEAALLSGFIKAILPRLFSLVNDKLNLHKGVKGDIDFLIKELRMIVGAIDDDLSVEHGAAAAAAAVQTLCMEDLRELAHGIEDCIDGVLYRAAREQRRSSSLLPRTVRATKKLLQTNQHLAQELQRLKRMVEEANQRKQRYTAAAPGQHGQVYSSAAAQVDEPWPSCSSASDPRIHEADLVGVDADRAELLEQLAERQPEQLKVIAIVGFCGLGKTALAAEAYNRETRGGRFERHAWVCAAHRSAREVLGELLRRIDAACHGDSDAGQLCVDIRQQLEKKRYFIVIDDIQTEDQWKSIKSAFPTDKDIGSRIVVTTTIQSVANACCSANGYLHKMSRLDKNCSKQLLSKKACPERYSHYKQPDSAAILKKCDGQPLALVTIGEFLQANGWPTGPNCEDLCNRLHYHLENDKTLERMRRVLVRNYTSLPGHALKACLLYFGMFPSDHPIRRKSLLRRWLAEGFVEPVSSSSNLDSTAAFDVLMDRNIIEPINVSNNDKVKTCQTYGMMREFISHMSISQNFVTFFCDDKFLPKYVRRLSLHGDTVVNGDNFNGIDLSLVRSLVVFGEAGTTVLDFSKYQLLRVLDLEKCDDLNDDHLKEICNLVLLKYLSLGGNISKLPKDIAKLKDLEALDVRRSKVKIMPVEVFGLPCLIHLLGKFKLSDKVKQKTEVQEFLSKGKSNLQTLAGFASNGSEGFLHLMRYMNKLRKLKIWCTSSAGSTDWTDLREAIQQFILDEKEANIGTRSLSLHFTGCSEDAINSLKEPCYLSSLKLHGNFPQLPQFVTSLRGLKELCLSSTKFTTGLLEALSNLSYLQYLKLVADELEKFIIKVQGFPRLLCLCIVLQCPTFPVIEEGALPFLVTLQLLCKDLHGLSDIKIECFKHLQEVTLHSGVTPATRQEWVKAAKEHPNRPKVLLLKSVDTAESEHTDVDSVMEAVKSETTEYSIAPEGPEQVIDMNNKMQLDHGLESSSVLNKQNNFADQSSSKDQLHYSFNNMGLSDVSPAVSELPNGMVPSCT.

A structured coiled coil (CC) domain region spans residues 1 to 182 (MEAALLSGFI…PRIHEADLVG (182 aa)). A coiled-coil region spans residues 105–145 (RTVRATKKLLQTNQHLAQELQRLKRMVEEANQRKQRYTAAA). Residues 189–466 (ELLEQLAERQ…WLAEGFVEPV (278 aa)) enclose the NB-ARC domain. LRR repeat units follow at residues 484–506 (RNII…TYGM), 507–530 (MREF…DKFL), 531–552 (PKYV…NFNG), 580–602 (LRVL…ICNL), 603–624 (VLLK…IAKL), 625–647 (KDLE…VFGL), 701–725 (MNKL…DLRE), 762–784 (PCYL…VTSL), 785–807 (RGLK…ALSN), 808–833 (LSYL…GFPR), and 854–877 (LPFL…KIEC).

The protein belongs to the disease resistance NB-LRR family. Expressed in leaves.

Probable disease resistance protein. Resistance proteins guard the plant against pathogens that contain an appropriate avirulence protein via an indirect interaction with this avirulence protein. That triggers a defense system including the hypersensitive response, which restricts the pathogen growth. At the opposite of cultivars Aichi asahi and Sasanishiki, the cultivars Nipponbare, Mokoto and Hitomebore don't recognize the effector avirulence protein AVR-Pia from M.oryzae. The chain is Disease resistance protein RGA4 from Oryza sativa subsp. japonica (Rice).